The chain runs to 725 residues: Glyoxysomal fatty acid beta-oxidation multifunctional protein MFP-a (725 aa).

The protein in the N-terminal section; belongs to the enoyl-CoA hydratase/isomerase family. It in the central section; belongs to the 3-hydroxyacyl-CoA dehydrogenase family.

Its subcellular location is the glyoxysome. It catalyses the reaction a (3S)-3-hydroxyacyl-CoA = a (2E)-enoyl-CoA + H2O. It carries out the reaction a 4-saturated-(3S)-3-hydroxyacyl-CoA = a (3E)-enoyl-CoA + H2O. The enzyme catalyses a (3Z)-enoyl-CoA = a 4-saturated (2E)-enoyl-CoA. The catalysed reaction is a (3E)-enoyl-CoA = a 4-saturated (2E)-enoyl-CoA. It catalyses the reaction (3S)-3-hydroxybutanoyl-CoA = (3R)-3-hydroxybutanoyl-CoA. It carries out the reaction a (3S)-3-hydroxyacyl-CoA + NAD(+) = a 3-oxoacyl-CoA + NADH + H(+). It participates in lipid metabolism; fatty acid beta-oxidation. The sequence is that of Glyoxysomal fatty acid beta-oxidation multifunctional protein MFP-a from Cucumis sativus (Cucumber).